A 334-amino-acid chain; its full sequence is MKTLDEFIVEKQAEYPNAKGALTGILSSIRLVAKIIHRDINRAGLSNDILGYAGNQNVQGENQMKLDVFANDTFKRALMAREEVAGFASEEEDDFVAFDTERGRNARYIILTDPLDGSSNIDVNVAVGTIFSIYRRISPVGTPVTLEDFMQPGHKQVAAGYVVYGSSTMLVYTTGNGVNGFTYDPSLGVFCMSHENLQIPSTGRIYSINEGQYLKFPMGVKKYIKYCQEEDKATNRPYTSRYIGSLVSDFHRNMLKGGIYIYPNATNYPNGKLRLLYEGNPMAFLAEQAGGLANDGYNRILDIEPLELHQRVPFFVGSKEMVKKANEFMRDYPE.

Mg(2+)-binding residues include E90, D113, L115, and D116. Residues 116–119 (DGSS), N209, Y242, and K272 each bind substrate. E278 provides a ligand contact to Mg(2+).

Belongs to the FBPase class 1 family. In terms of assembly, homotetramer. Mg(2+) serves as cofactor.

Its subcellular location is the cytoplasm. The enzyme catalyses beta-D-fructose 1,6-bisphosphate + H2O = beta-D-fructose 6-phosphate + phosphate. It participates in carbohydrate biosynthesis; gluconeogenesis. The polypeptide is Fructose-1,6-bisphosphatase class 1 (Actinobacillus succinogenes (strain ATCC 55618 / DSM 22257 / CCUG 43843 / 130Z)).